A 940-amino-acid polypeptide reads, in one-letter code: Valine--tRNA ligase (940 aa).

Positions 47–57 (PNVTGVLHMGH) match the 'HIGH' region motif. A 'KMSKS' region motif is present at residues 564–568 (KLSKS). Lys567 serves as a coordination point for ATP. A coiled-coil region spans residues 873–905 (EEHLLKEKGRLEKERVRLERAVENLERLLGDES).

This sequence belongs to the class-I aminoacyl-tRNA synthetase family. ValS type 1 subfamily. As to quaternary structure, monomer.

The protein resides in the cytoplasm. The catalysed reaction is tRNA(Val) + L-valine + ATP = L-valyl-tRNA(Val) + AMP + diphosphate. Functionally, catalyzes the attachment of valine to tRNA(Val). As ValRS can inadvertently accommodate and process structurally similar amino acids such as threonine, to avoid such errors, it has a 'posttransfer' editing activity that hydrolyzes mischarged Thr-tRNA(Val) in a tRNA-dependent manner. The protein is Valine--tRNA ligase of Chlamydia pneumoniae (Chlamydophila pneumoniae).